The chain runs to 546 residues: Chaperonin GroEL 2 (546 aa).

ATP is bound by residues 30–33 (TLGP), K51, 87–91 (DGTTT), G415, 479–481 (NAA), and D495. The disordered stretch occupies residues 524–546 (APKDAPPAQPAGVPGAGGTGFDF). Residues 537-546 (PGAGGTGFDF) are compositionally biased toward gly residues.

The protein belongs to the chaperonin (HSP60) family. As to quaternary structure, forms a cylinder of 14 subunits composed of two heptameric rings stacked back-to-back. Interacts with the co-chaperonin GroES.

The protein localises to the cytoplasm. The catalysed reaction is ATP + H2O + a folded polypeptide = ADP + phosphate + an unfolded polypeptide.. Its function is as follows. Together with its co-chaperonin GroES, plays an essential role in assisting protein folding. The GroEL-GroES system forms a nano-cage that allows encapsulation of the non-native substrate proteins and provides a physical environment optimized to promote and accelerate protein folding. In Burkholderia thailandensis (strain ATCC 700388 / DSM 13276 / CCUG 48851 / CIP 106301 / E264), this protein is Chaperonin GroEL 2.